The primary structure comprises 275 residues: Ribosomal RNA small subunit methyltransferase A (275 aa).

Positions 19, 21, 46, 71, 94, and 117 each coordinate S-adenosyl-L-methionine.

This sequence belongs to the class I-like SAM-binding methyltransferase superfamily. rRNA adenine N(6)-methyltransferase family. RsmA subfamily.

It localises to the cytoplasm. The enzyme catalyses adenosine(1518)/adenosine(1519) in 16S rRNA + 4 S-adenosyl-L-methionine = N(6)-dimethyladenosine(1518)/N(6)-dimethyladenosine(1519) in 16S rRNA + 4 S-adenosyl-L-homocysteine + 4 H(+). Specifically dimethylates two adjacent adenosines (A1518 and A1519) in the loop of a conserved hairpin near the 3'-end of 16S rRNA in the 30S particle. May play a critical role in biogenesis of 30S subunits. In Burkholderia mallei (strain NCTC 10247), this protein is Ribosomal RNA small subunit methyltransferase A.